A 62-amino-acid chain; its full sequence is Large ribosomal subunit protein bL28 (62 aa).

A disordered region spans residues 1-28 (MARVCTITGRKARSGNSRSHAMNATKRK).

This sequence belongs to the bacterial ribosomal protein bL28 family.

The chain is Large ribosomal subunit protein bL28 from Bacillus anthracis (strain CDC 684 / NRRL 3495).